A 71-amino-acid chain; its full sequence is MAQNSQNGNSSNQLLVPGAAQAIDQMKFEIASEFGVNLGAETTSRANGSVGGEITKRLVSFAQQNMSGQQF.

This sequence belongs to the alpha/beta-type SASP family.

SASP are bound to spore DNA. They are double-stranded DNA-binding proteins that cause DNA to change to an a-like conformation. They protect the DNA backbone from chemical and enzymatic cleavage and are thus involved in dormant spore's high resistance to UV light. This chain is Small, acid-soluble spore protein 2, found in Bacillus subtilis.